The sequence spans 428 residues: Ectonucleoside triphosphate diphosphohydrolase 5 (428 aa).

The signal sequence occupies residues 1–24 (MTSSRLPVLLALVFSSLSPVLSHS). Residue glutamate 172 is the Proton acceptor of the active site. An N-linked (GlcNAc...) asparagine glycan is attached at asparagine 232. Intrachain disulfides connect cysteine 272–cysteine 303 and cysteine 363–cysteine 377.

This sequence belongs to the GDA1/CD39 NTPase family. As to quaternary structure, monomer; active form. Homodimer; disulfide-linked. Homodimers are enzymatically inactive. Ca(2+) is required as a cofactor. The cofactor is Mg(2+).

The protein resides in the endoplasmic reticulum. It is found in the secreted. It carries out the reaction a ribonucleoside 5'-diphosphate + H2O = a ribonucleoside 5'-phosphate + phosphate + H(+). It catalyses the reaction GDP + H2O = GMP + phosphate + H(+). The enzyme catalyses UDP + H2O = UMP + phosphate + H(+). The catalysed reaction is IDP + H2O = IMP + phosphate + H(+). It carries out the reaction CDP + H2O = CMP + phosphate + H(+). It catalyses the reaction ADP + H2O = AMP + phosphate + H(+). It participates in protein modification; protein glycosylation. Hydrolyzes nucleoside diphosphates with a preference for GDP, IDP and UDP compared to ADP and CDP. In the lumen of the endoplasmic reticulum, hydrolyzes UDP that acts as an end-product feedback inhibitor of the UDP-Glc:glycoprotein glucosyltransferases. UMP can be transported back by an UDP-sugar antiporter to the cytosol where it is consumed to regenerate UDP-glucose. Therefore, it positively regulates protein reglucosylation by clearing UDP from the ER lumen and by promoting the regeneration of UDP-glucose. Protein reglucosylation is essential to proper glycoprotein folding and quality control in the ER. The chain is Ectonucleoside triphosphate diphosphohydrolase 5 (ENTPD5) from Gallus gallus (Chicken).